A 376-amino-acid chain; its full sequence is 1-deoxy-D-xylulose 5-phosphate reductoisomerase (376 aa).

The NADPH site is built by Ser-10, Gly-11, Ser-12, Val-13, Gly-36, Lys-37, Asn-38, and Asn-118. Lys-119 is a 1-deoxy-D-xylulose 5-phosphate binding site. Glu-120 is a binding site for NADPH. Asp-144 provides a ligand contact to Mn(2+). Residues Ser-145, Glu-146, Ser-170, and His-193 each coordinate 1-deoxy-D-xylulose 5-phosphate. Glu-146 serves as a coordination point for Mn(2+). NADPH is bound at residue Gly-199. 4 residues coordinate 1-deoxy-D-xylulose 5-phosphate: Ser-206, Asn-211, Lys-212, and Glu-215. Position 215 (Glu-215) interacts with Mn(2+).

Belongs to the DXR family. The cofactor is Mg(2+). Mn(2+) is required as a cofactor.

The enzyme catalyses 2-C-methyl-D-erythritol 4-phosphate + NADP(+) = 1-deoxy-D-xylulose 5-phosphate + NADPH + H(+). It functions in the pathway isoprenoid biosynthesis; isopentenyl diphosphate biosynthesis via DXP pathway; isopentenyl diphosphate from 1-deoxy-D-xylulose 5-phosphate: step 1/6. Its function is as follows. Catalyzes the NADPH-dependent rearrangement and reduction of 1-deoxy-D-xylulose-5-phosphate (DXP) to 2-C-methyl-D-erythritol 4-phosphate (MEP). The sequence is that of 1-deoxy-D-xylulose 5-phosphate reductoisomerase from Macrococcus caseolyticus (strain JCSC5402) (Macrococcoides caseolyticum).